Here is an 82-residue protein sequence, read N- to C-terminus: Small ribosomal subunit protein bS16 (82 aa).

This sequence belongs to the bacterial ribosomal protein bS16 family.

The sequence is that of Small ribosomal subunit protein bS16 from Francisella philomiragia subsp. philomiragia (strain ATCC 25017 / CCUG 19701 / FSC 153 / O#319-036).